The sequence spans 631 residues: ATP-dependent zinc metalloprotease FtsH (631 aa).

Residues 1 to 2 (MK) lie on the Stromal side of the membrane. Residues 3-23 (ISWKNILLTLIPLGLISFLVW) form a helical membrane-spanning segment. Residues 24-118 (QGFNNTTNPQ…AHATNDSTPA (95 aa)) lie on the Lumenal side of the membrane. A helical membrane pass occupies residues 119 to 139 (WSLIGNLIFPILLIAGLAFLF). The Stromal portion of the chain corresponds to 140–631 (RRSSNLPGGP…IDYKSQLKST (492 aa)). 213–220 (GPPGTGKT) contacts ATP. His-434 is a binding site for Zn(2+). Residue Glu-435 is part of the active site. 2 residues coordinate Zn(2+): His-438 and Asp-512.

It in the central section; belongs to the AAA ATPase family. The protein in the C-terminal section; belongs to the peptidase M41 family. Homohexamer. It depends on Zn(2+) as a cofactor.

The protein resides in the plastid. The protein localises to the chloroplast thylakoid membrane. Functionally, acts as a processive, ATP-dependent zinc metallopeptidase. The protein is ATP-dependent zinc metalloprotease FtsH of Guillardia theta (Cryptophyte).